The chain runs to 61 residues: Photosystem II reaction center protein K (61 aa).

The propeptide occupies 1-24 (MPNILSLTCICFNSVIYPTSFFFA). Residues 32–52 (IFNPIVDFMPVIPLFFFLLAF) form a helical membrane-spanning segment.

It belongs to the PsbK family. In terms of assembly, PSII is composed of 1 copy each of membrane proteins PsbA, PsbB, PsbC, PsbD, PsbE, PsbF, PsbH, PsbI, PsbJ, PsbK, PsbL, PsbM, PsbT, PsbX, PsbY, PsbZ, Psb30/Ycf12, at least 3 peripheral proteins of the oxygen-evolving complex and a large number of cofactors. It forms dimeric complexes.

Its subcellular location is the plastid. It is found in the chloroplast thylakoid membrane. One of the components of the core complex of photosystem II (PSII). PSII is a light-driven water:plastoquinone oxidoreductase that uses light energy to abstract electrons from H(2)O, generating O(2) and a proton gradient subsequently used for ATP formation. It consists of a core antenna complex that captures photons, and an electron transfer chain that converts photonic excitation into a charge separation. In Triticum aestivum (Wheat), this protein is Photosystem II reaction center protein K.